A 225-amino-acid polypeptide reads, in one-letter code: Uracil-DNA glycosylase (225 aa).

Asp65 (proton acceptor) is an active-site residue.

This sequence belongs to the uracil-DNA glycosylase (UDG) superfamily. UNG family.

Its subcellular location is the cytoplasm. It catalyses the reaction Hydrolyzes single-stranded DNA or mismatched double-stranded DNA and polynucleotides, releasing free uracil.. Functionally, excises uracil residues from the DNA which can arise as a result of misincorporation of dUMP residues by DNA polymerase or due to deamination of cytosine. This is Uracil-DNA glycosylase from Bacillus cereus (strain G9842).